A 115-amino-acid chain; its full sequence is Cytochrome c (115 aa).

Heme c contacts are provided by cysteine 26, cysteine 29, histidine 30, and methionine 91.

This sequence belongs to the cytochrome c family. Binds 1 heme c group covalently per subunit.

The protein localises to the mitochondrion intermembrane space. Its function is as follows. Electron carrier protein. The oxidized form of the cytochrome c heme group can accept an electron from the heme group of the cytochrome c1 subunit of cytochrome reductase. Cytochrome c then transfers this electron to the cytochrome oxidase complex, the final protein carrier in the mitochondrial electron-transport chain. In Theileria parva (East coast fever infection agent), this protein is Cytochrome c.